Consider the following 153-residue polypeptide: UPF0756 membrane protein NT01CX_1209 (153 aa).

4 helical membrane-spanning segments follow: residues 5–25 (IILL…LGIA), 45–65 (ENHF…IPII), 83–103 (IVCF…VGFL), and 113–133 (IILG…GPLI).

The protein belongs to the UPF0756 family.

The protein resides in the cell membrane. The sequence is that of UPF0756 membrane protein NT01CX_1209 from Clostridium novyi (strain NT).